A 123-amino-acid chain; its full sequence is MPTINQLIANPRVVQKSRKKVPALQQSPQKRGVCTRVYTTTPKKPNSALRKVAKVRLTNGFEVIGYIPGEGHNLQEHSVVMIRGGRVKDLPGVRYHILRGVLDTQGVKNRKQRRSKYGAKRPK.

3-methylthioaspartic acid is present on D89.

Belongs to the universal ribosomal protein uS12 family. As to quaternary structure, part of the 30S ribosomal subunit. Contacts proteins S8 and S17. May interact with IF1 in the 30S initiation complex.

With S4 and S5 plays an important role in translational accuracy. Functionally, interacts with and stabilizes bases of the 16S rRNA that are involved in tRNA selection in the A site and with the mRNA backbone. Located at the interface of the 30S and 50S subunits, it traverses the body of the 30S subunit contacting proteins on the other side and probably holding the rRNA structure together. The combined cluster of proteins S8, S12 and S17 appears to hold together the shoulder and platform of the 30S subunit. The protein is Small ribosomal subunit protein uS12 of Rhodopseudomonas palustris (strain BisA53).